Reading from the N-terminus, the 336-residue chain is Ornithine carbamoyltransferase, catabolic (336 aa).

Carbamoyl phosphate contacts are provided by residues 57–60 (STRT), glutamine 84, arginine 108, and 135–138 (HPTQ). L-ornithine-binding positions include asparagine 168, aspartate 232, and 236–237 (SM). Residues 274–275 (CL) and arginine 321 contribute to the carbamoyl phosphate site.

It belongs to the aspartate/ornithine carbamoyltransferase superfamily. OTCase family.

The protein resides in the cytoplasm. The enzyme catalyses carbamoyl phosphate + L-ornithine = L-citrulline + phosphate + H(+). Its pathway is amino-acid degradation; L-arginine degradation via ADI pathway; carbamoyl phosphate from L-arginine: step 2/2. Its function is as follows. Reversibly catalyzes the transfer of the carbamoyl group from carbamoyl phosphate (CP) to the N(epsilon) atom of ornithine (ORN) to produce L-citrulline. The polypeptide is Ornithine carbamoyltransferase, catabolic (arcB) (Pseudomonas putida (strain ATCC 47054 / DSM 6125 / CFBP 8728 / NCIMB 11950 / KT2440)).